Consider the following 469-residue polypeptide: Argininosuccinate lyase (469 aa).

This sequence belongs to the lyase 1 family. Argininosuccinate lyase subfamily.

Its subcellular location is the cytoplasm. The catalysed reaction is 2-(N(omega)-L-arginino)succinate = fumarate + L-arginine. It participates in amino-acid biosynthesis; L-arginine biosynthesis; L-arginine from L-ornithine and carbamoyl phosphate: step 3/3. This Burkholderia vietnamiensis (strain G4 / LMG 22486) (Burkholderia cepacia (strain R1808)) protein is Argininosuccinate lyase.